We begin with the raw amino-acid sequence, 415 residues long: Gamma-glutamyl phosphate reductase (415 aa).

Belongs to the gamma-glutamyl phosphate reductase family.

The protein localises to the cytoplasm. The enzyme catalyses L-glutamate 5-semialdehyde + phosphate + NADP(+) = L-glutamyl 5-phosphate + NADPH + H(+). Its pathway is amino-acid biosynthesis; L-proline biosynthesis; L-glutamate 5-semialdehyde from L-glutamate: step 2/2. Its function is as follows. Catalyzes the NADPH-dependent reduction of L-glutamate 5-phosphate into L-glutamate 5-semialdehyde and phosphate. The product spontaneously undergoes cyclization to form 1-pyrroline-5-carboxylate. The protein is Gamma-glutamyl phosphate reductase of Salmonella dublin (strain CT_02021853).